Reading from the N-terminus, the 9439-residue chain is Extracellular matrix-binding protein ebh (9439 aa).

FIVAR domains lie at 1815 to 1871 (ARRR…VNSA), 1901 to 1957 (AKEQ…INDA), 1985 to 2041 (AYDT…VRDA), 2071 to 2127 (AKKR…ITSE), 2155 to 2211 (AYNK…VTQA), 2241 to 2297 (AKNR…ISSE), 2325 to 2381 (AYNK…VEDA), 2411 to 2467 (AKEK…ITEN), 2488 to 2551 (DTTS…VNNA), 2581 to 2638 (ARNR…STEI), 2665 to 2720 (AKNQ…IRTN), 2748 to 2804 (AKTA…VSDE), 2832 to 2888 (AYNQ…VNNA), 2918 to 2974 (AKEQ…ISNA), 3002 to 3058 (AYNQ…VTAA), 3088 to 3144 (AKQQ…ITNE), 3172 to 3228 (AYNQ…VAQA), 3258 to 3314 (AKNQ…ISDE), 3335 to 3398 (DTTE…VNNA), 3428 to 3484 (ARLN…ITTE), 3512 to 3567 (AKTA…IKTN), 3595 to 3650 (IKRQ…VKES), 3678 to 3733 (AKNR…IRQN), 3802 to 3860 (SMTA…IDQK), 3928 to 3983 (AMTQ…LDPA), 4056 to 4114 (AMQA…VNQK), 4182 to 4240 (SMGT…VDNA), 4308 to 4365 (AMHT…INQK), 4433 to 4491 (VMEQ…IEQA), and 4559 to 4617 (SMQT…IDQT). A compositionally biased stretch (basic and acidic residues) spans 2495-2507 (EVRKLSRRGDTNN). The disordered stretch occupies residues 2495-2514 (EVRKLSRRGDTNNKKPSSVS). Residues 2925–2938 (AVDQVPSTEGMTQQ) are compositionally biased toward polar residues. The tract at residues 2925–2951 (AVDQVPSTEGMTQQTKDDYNSKQQAAQ) is disordered. The disordered stretch occupies residues 4649 to 4674 (GYLNDPQKSGEESLVNGSNTRSEVEE). FIVAR domains lie at 4685 to 4743 (AMKQ…IEQK), 4811 to 4869 (AMQA…IEQA), 4937 to 4995 (AMSN…IEQA), 5063 to 5115 (AMEA…VLDK), 5189 to 5246 (AMLG…INQL), 5314 to 5372 (LMGA…VTTA), 5440 to 5498 (AMGE…IDQA), 5566 to 5624 (AMKK…ITNA), 5692 to 5750 (AMKQ…IADT), 5818 to 5875 (DMST…LQDL), 5943 to 6000 (AMKA…IKQA), 6068 to 6126 (KMEE…INRT), 6194 to 6252 (AMQQ…IQAI), and 6320 to 6378 (EMGT…IADA). A compositionally biased stretch (polar residues) spans 5699-5712 (QVNQDDQISNSSPF). The disordered stretch occupies residues 5699–5719 (QVNQDDQISNSSPFINEDSDK). Positions 6413 to 6434 (NNSQRQSEHDEINSAPSRTEVS) are disordered. 18 consecutive FIVAR domains span residues 6446–6504 (AMRQ…IEDA), 6572–6630 (AMKA…INRA), 6698–6755 (SMNQ…IDQA), 6823–6877 (TMKA…ANDE), 6949–7007 (AMKK…INTI), 7075–7133 (SMNT…VERA), 7201–7259 (DMKK…IENA), 7327–7384 (AMKH…IKQL), 7452–7510 (AMEN…IEHA), 7578–7636 (AMKA…INSI), 7704–7762 (AMET…VDIV), 7830–7888 (AMKS…VRQA), 7956–8010 (VMGK…TKQA), 8078–8137 (IMGE…IDTF), 8205–8264 (AMKS…IQGL), 8332–8391 (AMKD…VLGL), 8459–8518 (KMKL…IQHL), and 8587–8643 (AMQG…ANII). The helical transmembrane segment at 9306–9324 (TVGVITLTGLLSSFWLVLA) threads the bilayer. Basic and acidic residues-rich tracts occupy residues 9363-9375 (DKEEQIQNDDKHS), 9386-9395 (EKQLSEEDIH), and 9404-9413 (QNSDNKDTKQ). The tract at residues 9363 to 9439 (DKEEQIQNDD…VVKTKKRSKK (77 aa)) is disordered. Positions 9414–9439 (KKVTSKKKKTPQSTKKVVKTKKRSKK) are enriched in basic residues.

It localises to the cell membrane. The protein is Extracellular matrix-binding protein ebh (ebh) of Staphylococcus epidermidis (strain ATCC 12228 / FDA PCI 1200).